The chain runs to 130 residues: DNA-directed RNA polymerase subunit omega (130 aa).

Positions 110–130 are disordered; sequence EELLKGLEGLAPPEEQPEEEE.

This sequence belongs to the RNA polymerase subunit omega family. The RNAP catalytic core consists of 2 alpha, 1 beta, 1 beta' and 1 omega subunit. When a sigma factor is associated with the core the holoenzyme is formed, which can initiate transcription.

The enzyme catalyses RNA(n) + a ribonucleoside 5'-triphosphate = RNA(n+1) + diphosphate. Promotes RNA polymerase assembly. Latches the N- and C-terminal regions of the beta' subunit thereby facilitating its interaction with the beta and alpha subunits. In Afipia carboxidovorans (strain ATCC 49405 / DSM 1227 / KCTC 32145 / OM5) (Oligotropha carboxidovorans), this protein is DNA-directed RNA polymerase subunit omega.